Here is a 564-residue protein sequence, read N- to C-terminus: Septation ring formation regulator EzrA (564 aa).

Residues 1–2 are Extracellular-facing; it reads ME. The helical transmembrane segment at 3 to 21 threads the bilayer; it reads FVIGLLALFLILFATGYLF. Topologically, residues 22–564 are cytoplasmic; sequence RKNIYKEIDR…RLEADAKQPE (543 aa). Coiled coils occupy residues 99–159, 243–281, and 310–498; these read QKSK…AYSH, KGYK…EAAA, and KVPE…VELV.

This sequence belongs to the EzrA family.

It localises to the cell membrane. Negative regulator of FtsZ ring formation; modulates the frequency and position of FtsZ ring formation. Inhibits FtsZ ring formation at polar sites. Interacts either with FtsZ or with one of its binding partners to promote depolymerization. The chain is Septation ring formation regulator EzrA from Bacillus licheniformis (strain ATCC 14580 / DSM 13 / JCM 2505 / CCUG 7422 / NBRC 12200 / NCIMB 9375 / NCTC 10341 / NRRL NRS-1264 / Gibson 46).